The primary structure comprises 258 residues: Tetratricopeptide repeat protein 33 (258 aa).

3 TPR repeats span residues 59–92 (SKRLKEEGGLLAEDGRQKEALTKWDEAIQLTPGD), 93–126 (AALYEMKAQVLMGVHEIFPAVQAAETAVQRNPHF), and 127–160 (VEAWQTLGRAQLSLGEITMAIRSFQIGLHICPAN). Residues 231-258 (SASGSENLSDRKEDKVETNDSKEFIKAR) form a disordered region. Residues 238 to 258 (LSDRKEDKVETNDSKEFIKAR) show a composition bias toward basic and acidic residues.

This is Tetratricopeptide repeat protein 33 (ttc33) from Xenopus laevis (African clawed frog).